Here is a 390-residue protein sequence, read N- to C-terminus: Succinate--CoA ligase [ADP-forming] subunit beta (390 aa).

One can recognise an ATP-grasp domain in the interval 9-244; it reads KSLFQQYGIP…ISQEDVREAK (236 aa). K46, E99, L102, and E107 together coordinate ATP. Mg(2+) contacts are provided by N199 and D213. Substrate-binding positions include N264 and 321–323; that span reads GIV.

It belongs to the succinate/malate CoA ligase beta subunit family. Heterotetramer of two alpha and two beta subunits. Requires Mg(2+) as cofactor.

The enzyme catalyses succinate + ATP + CoA = succinyl-CoA + ADP + phosphate. It catalyses the reaction GTP + succinate + CoA = succinyl-CoA + GDP + phosphate. It functions in the pathway carbohydrate metabolism; tricarboxylic acid cycle; succinate from succinyl-CoA (ligase route): step 1/1. In terms of biological role, succinyl-CoA synthetase functions in the citric acid cycle (TCA), coupling the hydrolysis of succinyl-CoA to the synthesis of either ATP or GTP and thus represents the only step of substrate-level phosphorylation in the TCA. The beta subunit provides nucleotide specificity of the enzyme and binds the substrate succinate, while the binding sites for coenzyme A and phosphate are found in the alpha subunit. This Hydrogenovibrio crunogenus (strain DSM 25203 / XCL-2) (Thiomicrospira crunogena) protein is Succinate--CoA ligase [ADP-forming] subunit beta.